The primary structure comprises 262 residues: tRNA pseudouridine synthase A (262 aa).

The active-site Nucleophile is the D52. Y103 is a substrate binding site.

This sequence belongs to the tRNA pseudouridine synthase TruA family.

It carries out the reaction uridine(38/39/40) in tRNA = pseudouridine(38/39/40) in tRNA. In terms of biological role, formation of pseudouridine at positions 38, 39 and 40 in the anticodon stem and loop of transfer RNAs. This Methanococcus maripaludis (strain DSM 14266 / JCM 13030 / NBRC 101832 / S2 / LL) protein is tRNA pseudouridine synthase A.